A 275-amino-acid polypeptide reads, in one-letter code: Dermonecrotic toxin SpeSicTox-betaIIA2ii (275 aa).

Histidine 5 is an active-site residue. Residues glutamate 25 and aspartate 27 each coordinate Mg(2+). Histidine 41 functions as the Nucleophile in the catalytic mechanism. Cystine bridges form between cysteine 45–cysteine 51 and cysteine 47–cysteine 190. Aspartate 85 provides a ligand contact to Mg(2+).

This sequence belongs to the arthropod phospholipase D family. Class II subfamily. It depends on Mg(2+) as a cofactor. In terms of tissue distribution, expressed by the venom gland.

Its subcellular location is the secreted. It carries out the reaction an N-(acyl)-sphingosylphosphocholine = an N-(acyl)-sphingosyl-1,3-cyclic phosphate + choline. The enzyme catalyses an N-(acyl)-sphingosylphosphoethanolamine = an N-(acyl)-sphingosyl-1,3-cyclic phosphate + ethanolamine. The catalysed reaction is a 1-acyl-sn-glycero-3-phosphocholine = a 1-acyl-sn-glycero-2,3-cyclic phosphate + choline. It catalyses the reaction a 1-acyl-sn-glycero-3-phosphoethanolamine = a 1-acyl-sn-glycero-2,3-cyclic phosphate + ethanolamine. Dermonecrotic toxins cleave the phosphodiester linkage between the phosphate and headgroup of certain phospholipids (sphingolipid and lysolipid substrates), forming an alcohol (often choline) and a cyclic phosphate. This toxin acts on sphingomyelin (SM). It may also act on ceramide phosphoethanolamine (CPE), lysophosphatidylcholine (LPC) and lysophosphatidylethanolamine (LPE), but not on lysophosphatidylserine (LPS), and lysophosphatidylglycerol (LPG). It acts by transphosphatidylation, releasing exclusively cyclic phosphate products as second products. Induces dermonecrosis, hemolysis, increased vascular permeability, edema, inflammatory response, and platelet aggregation. The sequence is that of Dermonecrotic toxin SpeSicTox-betaIIA2ii from Sicarius peruensis (Six-eyed sand spider).